The sequence spans 962 residues: Glycine dehydrogenase (decarboxylating) (962 aa).

Lys-709 carries the post-translational modification N6-(pyridoxal phosphate)lysine.

The protein belongs to the GcvP family. In terms of assembly, the glycine cleavage system is composed of four proteins: P, T, L and H. Pyridoxal 5'-phosphate serves as cofactor.

It catalyses the reaction N(6)-[(R)-lipoyl]-L-lysyl-[glycine-cleavage complex H protein] + glycine + H(+) = N(6)-[(R)-S(8)-aminomethyldihydrolipoyl]-L-lysyl-[glycine-cleavage complex H protein] + CO2. Functionally, the glycine cleavage system catalyzes the degradation of glycine. The P protein binds the alpha-amino group of glycine through its pyridoxal phosphate cofactor; CO(2) is released and the remaining methylamine moiety is then transferred to the lipoamide cofactor of the H protein. The chain is Glycine dehydrogenase (decarboxylating) from Shewanella sp. (strain MR-4).